A 397-amino-acid chain; its full sequence is Acetylornithine aminotransferase (397 aa).

Residue F129 coordinates pyridoxal 5'-phosphate. R132 is a binding site for N(2)-acetyl-L-ornithine. 214–217 is a binding site for pyridoxal 5'-phosphate; sequence DEVQ. At K243 the chain carries N6-(pyridoxal phosphate)lysine. A N(2)-acetyl-L-ornithine-binding site is contributed by S271. Residue T272 coordinates pyridoxal 5'-phosphate.

This sequence belongs to the class-III pyridoxal-phosphate-dependent aminotransferase family. ArgD subfamily. In terms of assembly, homodimer. Pyridoxal 5'-phosphate is required as a cofactor.

The protein resides in the cytoplasm. The enzyme catalyses N(2)-acetyl-L-ornithine + 2-oxoglutarate = N-acetyl-L-glutamate 5-semialdehyde + L-glutamate. The protein operates within amino-acid biosynthesis; L-arginine biosynthesis; N(2)-acetyl-L-ornithine from L-glutamate: step 4/4. This chain is Acetylornithine aminotransferase, found in Neisseria meningitidis serogroup A / serotype 4A (strain DSM 15465 / Z2491).